The chain runs to 185 residues: Threonylcarbamoyl-AMP synthase (185 aa).

Residues 1-185 (MKNFEQVLKA…AKTSQILRQG (185 aa)) form the YrdC-like domain. The tract at residues 163-185 (ETSGRNKPSEIRDAKTSQILRQG) is disordered. Basic and acidic residues predominate over residues 164 to 177 (TSGRNKPSEIRDAK).

The protein belongs to the SUA5 family. TsaC subfamily.

Its subcellular location is the cytoplasm. It catalyses the reaction L-threonine + hydrogencarbonate + ATP = L-threonylcarbamoyladenylate + diphosphate + H2O. Its function is as follows. Required for the formation of a threonylcarbamoyl group on adenosine at position 37 (t(6)A37) in tRNAs that read codons beginning with adenine. Catalyzes the conversion of L-threonine, HCO(3)(-)/CO(2) and ATP to give threonylcarbamoyl-AMP (TC-AMP) as the acyladenylate intermediate, with the release of diphosphate. This chain is Threonylcarbamoyl-AMP synthase, found in Vibrio campbellii (strain ATCC BAA-1116).